Here is a 966-residue protein sequence, read N- to C-terminus: Phosphoenolpyruvate carboxylase, housekeeping isozyme (966 aa).

The residue at position 11 (Ser-11) is a Phosphoserine. Catalysis depends on residues His-172 and Lys-601.

It belongs to the PEPCase type 1 family. In terms of assembly, homotetramer. The cofactor is Mg(2+).

The protein localises to the cytoplasm. It carries out the reaction oxaloacetate + phosphate = phosphoenolpyruvate + hydrogencarbonate. By light-reversible phosphorylation. Through the carboxylation of phosphoenolpyruvate (PEP) it forms oxaloacetate, a four-carbon dicarboxylic acid source for the tricarboxylic acid cycle. The protein is Phosphoenolpyruvate carboxylase, housekeeping isozyme of Saccharum hybrid (Sugarcane).